The chain runs to 747 residues: Protein neuralized (747 aa).

Residues 97–251 (PLQFHTVHGD…NCTGIEFLDA (155 aa)) enclose the NHR 1 domain. The span at 280-292 (LPQQQQQLPQQQL) shows a compositional bias: low complexity. Residues 280-309 (LPQQQQQLPQQQLTAHHPLQQSRRSLPGGT) are disordered. Residues 359 to 514 (PVPFHITKGR…STQSLRMFRQ (156 aa)) enclose the NHR 2 domain. The segment at 694–735 (CTICYENPIDSVLYMCGHMCMCYDCAIEQWRGVGGGQCPLCR) adopts an RING-type zinc-finger fold.

Its subcellular location is the nucleus. In terms of biological role, involved in neurogenesis. Interacts with other neurogenic proteins in the specification of the neuroblast versus epidermoblast cell fate. The chain is Protein neuralized (neur) from Drosophila virilis (Fruit fly).